The following is a 227-amino-acid chain: Orotidine 5'-phosphate decarboxylase (227 aa).

Substrate-binding positions include D8, K30, 59–68 (DLKLYDIPYT), T118, R178, Q187, G207, and R208. K61 (proton donor) is an active-site residue.

The protein belongs to the OMP decarboxylase family. Type 1 subfamily. In terms of assembly, homodimer.

The enzyme catalyses orotidine 5'-phosphate + H(+) = UMP + CO2. The protein operates within pyrimidine metabolism; UMP biosynthesis via de novo pathway; UMP from orotate: step 2/2. Catalyzes the decarboxylation of orotidine 5'-monophosphate (OMP) to uridine 5'-monophosphate (UMP). This chain is Orotidine 5'-phosphate decarboxylase, found in Helicobacter pylori (strain ATCC 700392 / 26695) (Campylobacter pylori).